We begin with the raw amino-acid sequence, 435 residues long: 3-phosphoshikimate 1-carboxyvinyltransferase (435 aa).

3-phosphoshikimate-binding residues include K22, S23, and R27. K22 is a binding site for phosphoenolpyruvate. Phosphoenolpyruvate-binding residues include G94 and R122. 3-phosphoshikimate is bound by residues S166, Q168, D314, and K341. Q168 lines the phosphoenolpyruvate pocket. D314 acts as the Proton acceptor in catalysis. Residues R345 and R388 each coordinate phosphoenolpyruvate.

This sequence belongs to the EPSP synthase family. As to quaternary structure, monomer.

The protein localises to the cytoplasm. The catalysed reaction is 3-phosphoshikimate + phosphoenolpyruvate = 5-O-(1-carboxyvinyl)-3-phosphoshikimate + phosphate. It functions in the pathway metabolic intermediate biosynthesis; chorismate biosynthesis; chorismate from D-erythrose 4-phosphate and phosphoenolpyruvate: step 6/7. Catalyzes the transfer of the enolpyruvyl moiety of phosphoenolpyruvate (PEP) to the 5-hydroxyl of shikimate-3-phosphate (S3P) to produce enolpyruvyl shikimate-3-phosphate and inorganic phosphate. This chain is 3-phosphoshikimate 1-carboxyvinyltransferase, found in Vesicomyosocius okutanii subsp. Calyptogena okutanii (strain HA).